A 354-amino-acid polypeptide reads, in one-letter code: UPF0283 membrane protein Meso_1416 (354 aa).

The disordered stretch occupies residues 1–28; the sequence is MSEPRRPAAFRIEPAPSPSPEATREDVR. 2 helical membrane passes run 71-91 and 105-125; these read LGAV…GLWA and LGWL…AIVV.

Belongs to the UPF0283 family.

The protein resides in the cell inner membrane. This is UPF0283 membrane protein Meso_1416 from Chelativorans sp. (strain BNC1).